Here is a 262-residue protein sequence, read N- to C-terminus: 5'-nucleotidase SurE (262 aa).

A divalent metal cation contacts are provided by aspartate 11, aspartate 12, serine 43, and asparagine 101. The segment covering 220 to 229 has biased composition (basic and acidic residues); sequence SAGDGPKEWP. A disordered region spans residues 220–246; it reads SAGDGPKEWPSDVSQIETNSPSLTPIQ. The segment covering 231–244 has biased composition (polar residues); sequence DVSQIETNSPSLTP.

Belongs to the SurE nucleotidase family. Requires a divalent metal cation as cofactor.

It is found in the cytoplasm. The catalysed reaction is a ribonucleoside 5'-phosphate + H2O = a ribonucleoside + phosphate. Nucleotidase that shows phosphatase activity on nucleoside 5'-monophosphates. In Prochlorococcus marinus (strain SARG / CCMP1375 / SS120), this protein is 5'-nucleotidase SurE.